The following is a 209-amino-acid chain: Uracil phosphoribosyltransferase (209 aa).

5-phospho-alpha-D-ribose 1-diphosphate-binding positions include R79, R104, and D131–S139. Residues I194 and G199–A201 contribute to the uracil site. Residue D200 coordinates 5-phospho-alpha-D-ribose 1-diphosphate.

It belongs to the UPRTase family. Requires Mg(2+) as cofactor.

It carries out the reaction UMP + diphosphate = 5-phospho-alpha-D-ribose 1-diphosphate + uracil. It participates in pyrimidine metabolism; UMP biosynthesis via salvage pathway; UMP from uracil: step 1/1. Its activity is regulated as follows. Allosterically activated by GTP. In terms of biological role, catalyzes the conversion of uracil and 5-phospho-alpha-D-ribose 1-diphosphate (PRPP) to UMP and diphosphate. In Pediococcus pentosaceus (strain ATCC 25745 / CCUG 21536 / LMG 10740 / 183-1w), this protein is Uracil phosphoribosyltransferase.